The chain runs to 208 residues: Outer-membrane lipoprotein carrier protein (208 aa).

Positions 1 to 22 (MKKRLCAVLLASPLLFSAAVFA) are cleaved as a signal peptide.

This sequence belongs to the LolA family. In terms of assembly, monomer.

It localises to the periplasm. Participates in the translocation of lipoproteins from the inner membrane to the outer membrane. Only forms a complex with a lipoprotein if the residue after the N-terminal Cys is not an aspartate (The Asp acts as a targeting signal to indicate that the lipoprotein should stay in the inner membrane). This chain is Outer-membrane lipoprotein carrier protein, found in Shewanella baltica (strain OS223).